The sequence spans 100 residues: Phosphoribosyl-ATP pyrophosphatase (100 aa).

It belongs to the PRA-PH family.

The protein resides in the cytoplasm. The enzyme catalyses 1-(5-phospho-beta-D-ribosyl)-ATP + H2O = 1-(5-phospho-beta-D-ribosyl)-5'-AMP + diphosphate + H(+). It functions in the pathway amino-acid biosynthesis; L-histidine biosynthesis; L-histidine from 5-phospho-alpha-D-ribose 1-diphosphate: step 2/9. This is Phosphoribosyl-ATP pyrophosphatase (hisE) from Methanopyrus kandleri (strain AV19 / DSM 6324 / JCM 9639 / NBRC 100938).